We begin with the raw amino-acid sequence, 152 residues long: Probable prefoldin subunit 5 (152 aa).

Belongs to the prefoldin subunit alpha family. As to quaternary structure, heterohexamer of two PFD-alpha type and four PFD-beta type subunits.

In terms of biological role, binds specifically to cytosolic chaperonin (c-CPN) and transfers target proteins to it. Binds to nascent polypeptide chain and promotes folding in an environment in which there are many competing pathways for nonnative proteins. The sequence is that of Probable prefoldin subunit 5 (pfd-5) from Caenorhabditis elegans.